Consider the following 892-residue polypeptide: Nitrogen assimilation transcription factor nirA (892 aa).

A disordered region spans residues 1-32 (MGEKLDPELSSDGPHTKSSSKGQGTSTDNAPA). Low complexity predominate over residues 16-27 (TKSSSKGQGTST). Residues 42 to 70 (CIACRRRKSKCDGNLPSCAACSSVYHTTC) constitute a DNA-binding region (zn(2)-C6 fungal-type). Disordered stretches follow at residues 646–714 (GPWD…SGPV), 731–761 (AHNEARQPEPTYLRPVSTSYGPVPSTQSAQE), and 842–892 (PNIP…SFQR). Residues 649 to 674 (DQAASPSTTSDSPPSVSSQSVVATTD) show a composition bias toward low complexity. 3 stretches are compositionally biased toward polar residues: residues 675-714 (LSQPVSQSAGNQPANPSMGTSPNLTQPVASQYSSTPSGPV), 746-761 (VSTSYGPVPSTQSAQE), and 876-892 (NVNSNQTNMIFPGSFQR).

It is found in the nucleus. Pathway-specific regulatory gene of nitrate assimilation; it activates the transcription of the genes for nitrate and nitrite reductases (niaD and niiA). The chain is Nitrogen assimilation transcription factor nirA (nirA) from Emericella nidulans (strain FGSC A4 / ATCC 38163 / CBS 112.46 / NRRL 194 / M139) (Aspergillus nidulans).